The primary structure comprises 43 residues: Plasma membrane ATPase proteolipid 2 (43 aa).

Residues 1 to 5 constitute a propeptide that is removed on maturation; the sequence is MLMST. A helical transmembrane segment spans residues 9-29; the sequence is GVILVFILVGLACIAIISTII. The Cytoplasmic segment spans residues 30-43; the sequence is YRKWQARQRGLQRF.

As to quaternary structure, monomer and homodimer. Associated with the 100 kDa subunit of the plasma membrane H(+)-ATPase.

The protein localises to the cell membrane. This is Plasma membrane ATPase proteolipid 2 (PMP2) from Saccharomyces cerevisiae (strain ATCC 204508 / S288c) (Baker's yeast).